A 161-amino-acid chain; its full sequence is Putative pre-16S rRNA nuclease (161 aa).

Belongs to the YqgF nuclease family.

The protein resides in the cytoplasm. Its function is as follows. Could be a nuclease involved in processing of the 5'-end of pre-16S rRNA. The polypeptide is Putative pre-16S rRNA nuclease (Prochlorococcus marinus (strain MIT 9313)).